A 542-amino-acid chain; its full sequence is CTP synthase (542 aa).

The amidoligase domain stretch occupies residues 1–269 (MQTKYIFITG…DALICELLHL (269 aa)). Ser-14 is a CTP binding site. Residue Ser-14 coordinates UTP. ATP is bound by residues 15-20 (SLGKGL) and Asp-72. Mg(2+)-binding residues include Asp-72 and Glu-143. Residues 150–152 (DIE), 189–194 (KTKPSQ), and Lys-225 contribute to the CTP site. Residues 189–194 (KTKPSQ) and Lys-225 contribute to the UTP site. 241–243 (KDV) contacts ATP. The region spanning 301–538 (YVQHQDAYKS…IQAMIIYHKS (238 aa)) is the Glutamine amidotransferase type-1 domain. L-glutamine is bound at residue Gly-358. The active-site Nucleophile; for glutamine hydrolysis is Cys-385. L-glutamine is bound by residues 386 to 389 (LGMQ), Glu-409, and Arg-466. Residues His-511 and Glu-513 contribute to the active site.

The protein belongs to the CTP synthase family. In terms of assembly, homotetramer.

It carries out the reaction UTP + L-glutamine + ATP + H2O = CTP + L-glutamate + ADP + phosphate + 2 H(+). The catalysed reaction is L-glutamine + H2O = L-glutamate + NH4(+). It catalyses the reaction UTP + NH4(+) + ATP = CTP + ADP + phosphate + 2 H(+). Its pathway is pyrimidine metabolism; CTP biosynthesis via de novo pathway; CTP from UDP: step 2/2. Its activity is regulated as follows. Allosterically activated by GTP, when glutamine is the substrate; GTP has no effect on the reaction when ammonia is the substrate. The allosteric effector GTP functions by stabilizing the protein conformation that binds the tetrahedral intermediate(s) formed during glutamine hydrolysis. Inhibited by the product CTP, via allosteric rather than competitive inhibition. In terms of biological role, catalyzes the ATP-dependent amination of UTP to CTP with either L-glutamine or ammonia as the source of nitrogen. Regulates intracellular CTP levels through interactions with the four ribonucleotide triphosphates. The protein is CTP synthase of Protochlamydia amoebophila (strain UWE25).